The sequence spans 1134 residues: Sterol regulatory element-binding protein 1 (1134 aa).

The interval 1–60 is transcriptional activation (acidic); sequence MDELAFGEAALEQTLAEMCELDTAVLNDIEDMLQLINNQDSDFPGLFDAPYAGGETGDTG. Residues 1–477 are Cytoplasmic-facing; it reads MDELAFGEAA…HSRGMLDRSR (477 aa). The short motif at 27–35 is the 9aaTAD element; it reads NDIEDMLQL. Positions 46–73 are disordered; the sequence is LFDAPYAGGETGDTGPSSPGANSPESFS. Positions 59 to 69 are enriched in polar residues; sequence TGPSSPGANSP. 2 positions are modified to phosphoserine: Ser96 and Ser115. Disordered stretches follow at residues 130 to 149 and 170 to 195; these read LQPA…SFPA and SGTL…VLPT. Polar residues predominate over residues 170–179; that stretch reads SGTLPGNTQQ. Residues 227 to 487 are interaction with LMNA; sequence QQVPVVLQPH…LALCVLAFLC (261 aa). The 51-residue stretch at 317-367 folds into the bHLH domain; it reads EKRTAHNAIEKRYRSSINDKIVELKDLVVGTEAKLNKSAVLRKAIDYIRFL. 2 positions are modified to phosphoserine; by SIK1: Ser331 and Ser332. Positions 367–388 are leucine-zipper; the sequence is LQHSNQKLKQENLTLRSAHKSK. Ser389 is subject to Phosphoserine; by AMPK. Ser395 carries the phosphoserine; by SIK1 modification. The tract at residues 415 to 468 is disordered; that stretch reads VETLTPPPSDAGSPSQSSPLSFGSRASSSGGSDSEPDSPAFEDSQVKAQRLPSH. The segment covering 424–453 has biased composition (low complexity); it reads DAGSPSQSSPLSFGSRASSSGGSDSEPDSP. Position 448 is a phosphoserine (Ser448). The chain crosses the membrane as a helical span at residues 478–498; it reads LALCVLAFLCLTCNPLASLFG. The Lumenal segment spans residues 499–536; that stretch reads WGILTPSDATGTHRSSGRSMLEAESRDGSNWTQWLLPP. The helical transmembrane segment at 537-557 threads the bilayer; the sequence is LVWLANGLLVLACLALLFVYG. The Cytoplasmic portion of the chain corresponds to 558-1134; that stretch reads EPVTRPHSGP…LGGGTTVTSS (577 aa). At Ser1047 the chain carries Phosphoserine.

This sequence belongs to the SREBP family. In terms of assembly, forms a tight complex with SCAP, the SCAP-SREBP complex, in the endoplasmic reticulum membrane and the Golgi apparatus. Interacts with PAQR3; the interaction anchors the SCAP-SREBP complex to the Golgi apparatus in low cholesterol conditions. As to quaternary structure, efficient DNA binding of the soluble transcription factor fragment requires dimerization with another bHLH protein. Interacts with CEBPA, the interaction produces a transcriptional synergy. Interacts with LMNA. Post-translationally, processed in the Golgi apparatus, releasing the protein from the membrane. At low cholesterol the SCAP-SREBP complex is recruited into COPII vesicles for export from the endoplasmic reticulum. In the Golgi, complex SREBPs are cleaved sequentially by site-1 (MBTPS1, S1P) and site-2 (MBTPS2, S2P) proteases. The first cleavage by site-1 protease occurs within the luminal loop, the second cleavage by site-2 protease occurs within the first transmembrane domain, releasing the transcription factor from the Golgi membrane. In terms of processing, phosphorylated by AMPK, leading to suppress protein processing and nuclear translocation, and repress target gene expression. Phosphorylation at Ser-389 by SIK1 represses activity possibly by inhibiting DNA-binding. SCAP-free SREBF1 is ubiquitinated by the BCR(ARMC5) complex, leading to its degradation. Post-translationally, ubiquitinated; the nuclear form has a rapid turnover and is rapidly ubiquitinated and degraded by the proteasome in the nucleus. In terms of tissue distribution, predominant isoform expressed in most tissues. Predominates in liver, adrenal gland, brain and adipose tissue. Also found in kidney, thymus, testis, muscle, jejunum, and ileum. Expressed only in select tissues, such as intestinal epithelial, heart, macrophage and bone marrow dendritic cells. Also found in kidney, thymus, testis, muscle, jejunum, and ileum.

It is found in the endoplasmic reticulum membrane. Its subcellular location is the golgi apparatus membrane. The protein localises to the cytoplasmic vesicle. The protein resides in the COPII-coated vesicle membrane. It localises to the nucleus. Activation by cleavage is down-regulated upon activation of SIRT3-dependent PRKAA1/AMPK-alpha signaling cascade which leads to inhibition of ATP-consuming lipogenesis to restore cellular energy balance. In terms of biological role, precursor of the transcription factor form (Processed sterol regulatory element-binding protein 1), which is embedded in the endoplasmic reticulum membrane. Low sterol concentrations promote processing of this form, releasing the transcription factor form that translocates into the nucleus and activates transcription of genes involved in cholesterol biosynthesis and lipid homeostasis. Functionally, key transcription factor that regulates expression of genes involved in cholesterol biosynthesis and lipid homeostasis. Binds to the sterol regulatory element 1 (SRE-1) (5'-ATCACCCCAC-3'). Has dual sequence specificity binding to both an E-box motif (5'-ATCACGTGA-3') and to SRE-1 (5'-ATCACCCCAC-3'). Regulates the promoters of genes involved in cholesterol biosynthesis and the LDL receptor (LDLR) pathway of sterol regulation. Its function is as follows. Isoform expressed only in select tissues, which has higher transcriptional activity compared to SREBP-1C. Able to stimulate both lipogenic and cholesterogenic gene expression. Has a role in the nutritional regulation of fatty acids and triglycerides in lipogenic organs such as the liver. Required for innate immune response in macrophages by regulating lipid metabolism. Predominant isoform expressed in most tissues, which has weaker transcriptional activity compared to isoform SREBP-1A. Primarily controls expression of lipogenic gene. Strongly activates global lipid synthesis in rapidly growing cells. The polypeptide is Sterol regulatory element-binding protein 1 (Mus musculus (Mouse)).